We begin with the raw amino-acid sequence, 168 residues long: Microtubule-associated protein Jupiter (168 aa).

Over residues 1-14 (MISNFDCTDNQASS) the composition is skewed to polar residues. The tract at residues 1-33 (MISNFDCTDNQASSKVLRPPGGGSSDIFGSEMP) is disordered. At S24 the chain carries Phosphoserine. T35 is subject to Phosphothreonine. Positions 76–87 (RGQKTVDSHSRL) are enriched in basic and acidic residues. Disordered stretches follow at residues 76 to 106 (RGQK…KSSI) and 124 to 168 (NGHY…GAGK). 2 positions are modified to phosphothreonine: T92 and T96. A phosphoserine mark is found at S105, S133, and S144. Low complexity predominate over residues 131 to 144 (SGSVSSASSSVSSS). Positions 145–155 (TENLKMNSGSR) are enriched in polar residues.

The protein belongs to the MAP Jupiter family.

It localises to the nucleus. It is found in the cytoplasm. The protein localises to the cytoskeleton. Its subcellular location is the spindle. Functionally, binds to all microtubule populations. The chain is Microtubule-associated protein Jupiter from Drosophila simulans (Fruit fly).